The following is a 545-amino-acid chain: MRGGGFVQIFKDFSNWSTVAVVPHVANANNKISRIFWIAIFLFVLGMFAYELYILIAKFFSYPATVNTEILFEKQIFPVVTVCNMNPYKYSVVKSNSAFSSVNTLMTTYSDATVGTFSTDKWGLYADNDETYDLDSRAADALVLEANLISDTAKVPALYTYADLIQDCSFAGIPCSESDFTKFIDPVYGACYSFNEDASLNYSVSREGIQFGLKLMLTVTQTKTNGNTDSLPTTKLAGARIGVNSRGSSPGLDSNGIDAGVGYESAVSVSLTQNVRAKKPYGTCVDREPDSSDYYKDFIYTLETCFNGCKQRDTIAKCQCANPRLALGSTDTACQPIKADLDCLQTLKGNQTSSTPNIDLLVECNCNPPCDESTYTPTVSLAQFPSTSYYVATSSTAGVGSCSSTNSKFSSKSDCQKWYNNNGMIIQVFLETLSYELYTETAGYTVSNVINDLGGQAGLWLGLSVISVVEMTGLMLVMGAFCVTGGAIKMAPDDDEIENDHRIKDVEDVKKEIDHLEKKHGEMESGSDGEVDDIENKGDEEKKKK.

Residues 1–34 are Cytoplasmic-facing; the sequence is MRGGGFVQIFKDFSNWSTVAVVPHVANANNKISR. Residues 35 to 55 form a helical membrane-spanning segment; that stretch reads IFWIAIFLFVLGMFAYELYIL. At 56–457 the chain is on the extracellular side; it reads IAKFFSYPAT…NVINDLGGQA (402 aa). Cys83 and Cys191 are joined by a disulfide. N-linked (GlcNAc...) asparagine glycosylation occurs at Asn201. Cystine bridges form between Cys284–Cys370, Cys305–Cys366, Cys309–Cys364, Cys318–Cys343, and Cys320–Cys334. Asn350 carries N-linked (GlcNAc...) asparagine glycosylation. The helical transmembrane segment at 458 to 478 threads the bilayer; it reads GLWLGLSVISVVEMTGLMLVM. The GAS motif; ion selectivity filter signature appears at 462 to 464; sequence GLS. The Cytoplasmic portion of the chain corresponds to 479–545; it reads GAFCVTGGAI…NKGDEEKKKK (67 aa). 2 stretches are compositionally biased toward basic and acidic residues: residues 514–523 and 534–545; these read DHLEKKHGEM and IENKGDEEKKKK. The tract at residues 514–545 is disordered; the sequence is DHLEKKHGEMESGSDGEVDDIENKGDEEKKKK.

This sequence belongs to the amiloride-sensitive sodium channel (TC 1.A.6) family. In terms of assembly, can form homotrimers. Heterotrimer; forms functional heterotrimers producing channel with different properties.

It localises to the cell membrane. It carries out the reaction Na(+)(in) = Na(+)(out). With respect to regulation, inhibited by the diuretic drug amiloride. In terms of biological role, could form pH-gated heterotrimeric sodium channels that act as postsynaptic excitatory sensors in the nervous system, generating rapid, transient inward currents that fully desensitize upon extracellular acidification. The sequence is that of Degenerin-like protein asic-2 (asic-2) from Caenorhabditis elegans.